We begin with the raw amino-acid sequence, 178 residues long: Ribosome maturation factor RimP (178 aa).

Belongs to the RimP family.

Its subcellular location is the cytoplasm. Its function is as follows. Required for maturation of 30S ribosomal subunits. In Streptococcus pyogenes serotype M18 (strain MGAS8232), this protein is Ribosome maturation factor RimP.